Here is an 84-residue protein sequence, read N- to C-terminus: Small ribosomal subunit protein bS20 (84 aa).

The interval 1–25 is disordered; it reads MPVIKSAMKRVRTSEKAAARNRSQM.

It belongs to the bacterial ribosomal protein bS20 family.

Binds directly to 16S ribosomal RNA. The chain is Small ribosomal subunit protein bS20 from Pediococcus pentosaceus (strain ATCC 25745 / CCUG 21536 / LMG 10740 / 183-1w).